Reading from the N-terminus, the 527-residue chain is Methane monooxygenase component A alpha chain (527 aa).

Fe cation is bound by residues Glu114, Glu144, and His147. Residue Cys151 is part of the active site. The Fe cation site is built by Glu209, Glu243, and His246.

It belongs to the TmoA/XamoA family. In terms of assembly, m.capsulatus has two forms of methane monooxygenase, a soluble and a membrane-bound type. The soluble type consists of four components (A to D): protein A, comprising three chains, in an alpha-2, beta-2, gamma-2 configuration, is a nonheme iron protein containing an unusual mu-hydroxo bridge structure at its active site and interacts with both oxygen and methane. It depends on Fe cation as a cofactor.

The catalysed reaction is methane + NADH + O2 + H(+) = methanol + NAD(+) + H2O. It carries out the reaction methane + NADPH + O2 + H(+) = methanol + NADP(+) + H2O. Functionally, responsible for the initial oxygenation of methane to methanol in methanotrophs. It also catalyzes the monohydroxylation of a variety of unactivated alkenes, alicyclic, aromatic and heterocyclic compounds. The sequence is that of Methane monooxygenase component A alpha chain (mmoX) from Methylococcus capsulatus (strain ATCC 33009 / NCIMB 11132 / Bath).